A 207-amino-acid chain; its full sequence is Ribosomal RNA small subunit methyltransferase G (207 aa).

Residues Gly-74, Leu-79, 125 to 126, and Arg-140 each bind S-adenosyl-L-methionine; that span reads VE.

This sequence belongs to the methyltransferase superfamily. RNA methyltransferase RsmG family.

It is found in the cytoplasm. The catalysed reaction is guanosine(527) in 16S rRNA + S-adenosyl-L-methionine = N(7)-methylguanosine(527) in 16S rRNA + S-adenosyl-L-homocysteine. Specifically methylates the N7 position of guanine in position 527 of 16S rRNA. This Shewanella loihica (strain ATCC BAA-1088 / PV-4) protein is Ribosomal RNA small subunit methyltransferase G.